The following is a 137-amino-acid chain: Phosphoribosyl-AMP cyclohydrolase (137 aa).

Aspartate 84 is a Mg(2+) binding site. Zn(2+) is bound at residue cysteine 85. Positions 86 and 88 each coordinate Mg(2+). Residues cysteine 101 and cysteine 108 each contribute to the Zn(2+) site.

This sequence belongs to the PRA-CH family. As to quaternary structure, homodimer. Mg(2+) serves as cofactor. It depends on Zn(2+) as a cofactor.

The protein localises to the cytoplasm. It catalyses the reaction 1-(5-phospho-beta-D-ribosyl)-5'-AMP + H2O = 1-(5-phospho-beta-D-ribosyl)-5-[(5-phospho-beta-D-ribosylamino)methylideneamino]imidazole-4-carboxamide. Its pathway is amino-acid biosynthesis; L-histidine biosynthesis; L-histidine from 5-phospho-alpha-D-ribose 1-diphosphate: step 3/9. Functionally, catalyzes the hydrolysis of the adenine ring of phosphoribosyl-AMP. The polypeptide is Phosphoribosyl-AMP cyclohydrolase (Chlorobium phaeobacteroides (strain DSM 266 / SMG 266 / 2430)).